A 490-amino-acid polypeptide reads, in one-letter code: NAD/NADP-dependent betaine aldehyde dehydrogenase (490 aa).

Residues threonine 26, isoleucine 27, and aspartate 93 each coordinate K(+). Position 150 to 153 (150 to 153) interacts with NADPH; the sequence is GAWN. The Charge relay system role is filled by lysine 162. 176–179 is an NADPH binding site; the sequence is KPSE. Position 180 (valine 180) interacts with K(+). NADPH-binding positions include glycine 209 and 230–233; that span reads GTST. A K(+)-binding site is contributed by leucine 246. Glutamate 252 functions as the Proton acceptor in the catalytic mechanism. Residues cysteine 286 and glutamate 387 each coordinate NADPH. Cysteine 286 acts as the Nucleophile in catalysis. Residue cysteine 286 is modified to Cysteine sulfenic acid (-SOH). The K(+) site is built by lysine 457 and glycine 460. Residue glutamate 464 is the Charge relay system of the active site.

It belongs to the aldehyde dehydrogenase family. In terms of assembly, dimer of dimers. Requires K(+) as cofactor.

The catalysed reaction is betaine aldehyde + NAD(+) + H2O = glycine betaine + NADH + 2 H(+). It carries out the reaction betaine aldehyde + NADP(+) + H2O = glycine betaine + NADPH + 2 H(+). It participates in amine and polyamine biosynthesis; betaine biosynthesis via choline pathway; betaine from betaine aldehyde: step 1/1. Functionally, involved in the biosynthesis of the osmoprotectant glycine betaine. Catalyzes the irreversible oxidation of betaine aldehyde to the corresponding acid. In P.aeruginosa this reaction is a compulsory step in the assimilation of carbon and nitrogen when bacteria are growing in choline or choline precursors. Can use NADP(+) with similar efficiency to NAD(+), a property that can be used by the bacterium to produce the NADPH needed to combat the oxidative stress imposed by the host defenses. In Pseudomonas aeruginosa (strain ATCC 15692 / DSM 22644 / CIP 104116 / JCM 14847 / LMG 12228 / 1C / PRS 101 / PAO1), this protein is NAD/NADP-dependent betaine aldehyde dehydrogenase.